A 166-amino-acid polypeptide reads, in one-letter code: Endoribonuclease YbeY (166 aa).

Zn(2+) contacts are provided by histidine 111, histidine 115, and histidine 121. The tract at residues 141-166 (LGYPDPYAEDESADHPHSDTPSKDHE) is disordered. A compositionally biased stretch (basic and acidic residues) spans 153–166 (ADHPHSDTPSKDHE).

Belongs to the endoribonuclease YbeY family. Requires Zn(2+) as cofactor.

The protein localises to the cytoplasm. Functionally, single strand-specific metallo-endoribonuclease involved in late-stage 70S ribosome quality control and in maturation of the 3' terminus of the 16S rRNA. The chain is Endoribonuclease YbeY from Pseudomonas savastanoi pv. phaseolicola (strain 1448A / Race 6) (Pseudomonas syringae pv. phaseolicola (strain 1448A / Race 6)).